A 262-amino-acid chain; its full sequence is Flap endonuclease Xni (262 aa).

Aspartate 105 serves as a coordination point for Mg(2+). The region spanning 162–259 (ERSQFLDLMA…VIDSQPEKTI (98 aa)) is the 5'-3' exonuclease domain. K(+) is bound by residues leucine 172, alanine 173, proline 181, isoleucine 183, and isoleucine 186. The tract at residues 185–190 (GIGPKS) is interaction with DNA.

Belongs to the Xni family. Mg(2+) serves as cofactor. Requires K(+) as cofactor.

Functionally, has flap endonuclease activity. During DNA replication, flap endonucleases cleave the 5'-overhanging flap structure that is generated by displacement synthesis when DNA polymerase encounters the 5'-end of a downstream Okazaki fragment. This is Flap endonuclease Xni from Shewanella baltica (strain OS185).